Reading from the N-terminus, the 177-residue chain is ATP synthase subunit delta (177 aa).

It belongs to the ATPase delta chain family. F-type ATPases have 2 components, F(1) - the catalytic core - and F(0) - the membrane proton channel. F(1) has five subunits: alpha(3), beta(3), gamma(1), delta(1), epsilon(1). F(0) has three main subunits: a(1), b(2) and c(10-14). The alpha and beta chains form an alternating ring which encloses part of the gamma chain. F(1) is attached to F(0) by a central stalk formed by the gamma and epsilon chains, while a peripheral stalk is formed by the delta and b chains.

It is found in the cell inner membrane. In terms of biological role, f(1)F(0) ATP synthase produces ATP from ADP in the presence of a proton or sodium gradient. F-type ATPases consist of two structural domains, F(1) containing the extramembraneous catalytic core and F(0) containing the membrane proton channel, linked together by a central stalk and a peripheral stalk. During catalysis, ATP synthesis in the catalytic domain of F(1) is coupled via a rotary mechanism of the central stalk subunits to proton translocation. Functionally, this protein is part of the stalk that links CF(0) to CF(1). It either transmits conformational changes from CF(0) to CF(1) or is implicated in proton conduction. This chain is ATP synthase subunit delta, found in Citrobacter koseri (strain ATCC BAA-895 / CDC 4225-83 / SGSC4696).